The following is a 296-amino-acid chain: Sulfate adenylyltransferase subunit 2 (296 aa).

It belongs to the PAPS reductase family. CysD subfamily. As to quaternary structure, heterodimer composed of CysD, the smaller subunit, and CysN.

The enzyme catalyses sulfate + ATP + H(+) = adenosine 5'-phosphosulfate + diphosphate. It functions in the pathway sulfur metabolism; hydrogen sulfide biosynthesis; sulfite from sulfate: step 1/3. Functionally, with CysN forms the ATP sulfurylase (ATPS) that catalyzes the adenylation of sulfate producing adenosine 5'-phosphosulfate (APS) and diphosphate, the first enzymatic step in sulfur assimilation pathway. APS synthesis involves the formation of a high-energy phosphoric-sulfuric acid anhydride bond driven by GTP hydrolysis by CysN coupled to ATP hydrolysis by CysD. The protein is Sulfate adenylyltransferase subunit 2 of Rhodospirillum rubrum (strain ATCC 11170 / ATH 1.1.1 / DSM 467 / LMG 4362 / NCIMB 8255 / S1).